A 401-amino-acid polypeptide reads, in one-letter code: Tumor necrosis factor receptor superfamily member 11B (401 aa).

Residues 1–21 form the signal peptide; sequence MNKWLCCALLVLLDIIEWTTQ. 4 TNFR-Cys repeats span residues 24–62, 65–105, 107–142, and 145–185; these read LPPKYLHYDPETGHQLLCDKCAPGTYLKQHCTVRRKTLC, CPDH…NRVC, CEEGRYLEIEFCLKHRSCPPGSGVVQAGTPERNTVC, and CPDG…DNVC. 8 disulfide bridges follow: Cys-41-Cys-54, Cys-44-Cys-62, Cys-65-Cys-80, Cys-83-Cys-97, Cys-87-Cys-105, Cys-107-Cys-118, Cys-124-Cys-142, and Cys-145-Cys-160. The N-linked (GlcNAc...) asparagine glycan is linked to Asn-98. Asn-165 and Asn-178 each carry an N-linked (GlcNAc...) asparagine glycan. A disulfide bridge connects residues Cys-166 and Cys-185. Death domains follow at residues 198 to 269 and 283 to 365; these read DVTL…MVKK and RHLG…THSL. The N-linked (GlcNAc...) asparagine glycan is linked to Asn-289.

In terms of assembly, homodimer. Interacts with TNFSF10 and TNFSF11. In terms of tissue distribution, highly expressed in liver, lung, stomach, intestines and calvaria. Highly expressed in decidua and placenta, and in embryo.

The protein resides in the secreted. Its function is as follows. Acts as a decoy receptor for TNFSF11/RANKL and thereby neutralizes its function in osteoclastogenesis. Inhibits the activation of osteoclasts and promotes osteoclast apoptosis in vitro. Bone homeostasis seems to depend on the local ratio between TNFSF11 and TNFRSF11B. May also play a role in preventing arterial calcification. May act as decoy receptor for TNFSF10/TRAIL and protect against apoptosis. TNFSF10/TRAIL binding blocks the inhibition of osteoclastogenesis. This is Tumor necrosis factor receptor superfamily member 11B (Tnfrsf11b) from Mus musculus (Mouse).